A 271-amino-acid polypeptide reads, in one-letter code: ATP synthase subunit a (271 aa).

A run of 5 helical transmembrane segments spans residues 38–58 (FWTL…LFLA), 100–120 (VIAP…LMDL), 146–166 (DVNI…FYSI), 211–231 (LFGN…LLPW), and 242–262 (AIFH…LTIV).

This sequence belongs to the ATPase A chain family. As to quaternary structure, F-type ATPases have 2 components, CF(1) - the catalytic core - and CF(0) - the membrane proton channel. CF(1) has five subunits: alpha(3), beta(3), gamma(1), delta(1), epsilon(1). CF(0) has three main subunits: a(1), b(2) and c(9-12). The alpha and beta chains form an alternating ring which encloses part of the gamma chain. CF(1) is attached to CF(0) by a central stalk formed by the gamma and epsilon chains, while a peripheral stalk is formed by the delta and b chains.

The protein resides in the cell inner membrane. Its function is as follows. Key component of the proton channel; it plays a direct role in the translocation of protons across the membrane. The polypeptide is ATP synthase subunit a (Klebsiella pneumoniae (strain 342)).